Here is a 37-residue protein sequence, read N- to C-terminus: PHAFPFLTPEQKKELSDIAHKIVAPGKGILAADESTG.

The protein belongs to the class I fructose-bisphosphate aldolase family. As to quaternary structure, tetramer.

It carries out the reaction beta-D-fructose 1,6-bisphosphate = D-glyceraldehyde 3-phosphate + dihydroxyacetone phosphate. The protein operates within carbohydrate degradation; glycolysis; D-glyceraldehyde 3-phosphate and glycerone phosphate from D-glucose: step 4/4. Its function is as follows. Plays a key role in glycolysis and gluconeogenesis. This chain is Fructose-bisphosphate aldolase A, found in Thunnus albacares (Yellowfin tuna).